We begin with the raw amino-acid sequence, 346 residues long: Uroporphyrinogen decarboxylase (346 aa).

Substrate contacts are provided by residues 26 to 30 (RQAGR), Asp76, Tyr153, Ser208, and His323.

The protein belongs to the uroporphyrinogen decarboxylase family. As to quaternary structure, homodimer.

It localises to the cytoplasm. The enzyme catalyses uroporphyrinogen III + 4 H(+) = coproporphyrinogen III + 4 CO2. It functions in the pathway porphyrin-containing compound metabolism; protoporphyrin-IX biosynthesis; coproporphyrinogen-III from 5-aminolevulinate: step 4/4. Functionally, catalyzes the decarboxylation of four acetate groups of uroporphyrinogen-III to yield coproporphyrinogen-III. The protein is Uroporphyrinogen decarboxylase of Prochlorococcus marinus (strain MIT 9312).